The chain runs to 189 residues: Thymidine kinase (189 aa).

Residues Gly9 to Thr16 and Asp85 to Gln88 contribute to the ATP site. Glu86 (proton acceptor) is an active-site residue. 4 residues coordinate Zn(2+): Cys143, Cys146, Cys180, and His183.

This sequence belongs to the thymidine kinase family. As to quaternary structure, homotetramer.

The protein resides in the cytoplasm. It carries out the reaction thymidine + ATP = dTMP + ADP + H(+). In Streptococcus pyogenes serotype M6 (strain ATCC BAA-946 / MGAS10394), this protein is Thymidine kinase.